A 240-amino-acid chain; its full sequence is Transmembrane protein 65 (240 aa).

Residues 1 to 61 (MSRLLPLLRS…RRLGTHPKKE (61 aa)) constitute a mitochondrion transit peptide. Residues 62–110 (PMEALNTAQGARDFIYSLHSTERSCLLKELHRFESIAIAQEKLEAPPPT) are Cytoplasmic-facing. The chain crosses the membrane as a helical span at residues 111 to 131 (PGQLRYVFIHNAIPFIGFGFL). Over 132–142 (DNAIMIVAGTH) the chain is Extracellular. A helical transmembrane segment spans residues 143–165 (IEMSIGIILGISTMAAAALGNLV). The Cytoplasmic portion of the chain corresponds to 166 to 209 (SDLAGLGLAGYVEALASRLGLSIPDLTPKQVDMWQTRLSTHLGK). Residues 210–230 (AVGVTIGCILGMFPLIFFGGG) form a helical membrane-spanning segment. Residues 231–240 (EEDEKLETKS) are Extracellular-facing.

Monomer. Homodimer. Interacts with GJA1. Interacts weakly with DSP. Interacts with SCN1B. In terms of tissue distribution, predominantly expressed the ventricular tissue (at protein level).

It localises to the cell membrane. It is found in the mitochondrion inner membrane. Its function is as follows. Essential for maintaining proper cardiac intercalated disk (ICD) structure and function as well as cardiac conduction velocity in the heart. Its association with SCN1B is required for stabilizing the perinexus in the ICD and for localization of GJA1 and SCN5A to the ICD. May regulate the function of the gap junction protein GJA1 and may contribute to the stability and proper localization of GJA1 to cardiac intercalated disk thereby regulating gap junction communication. May also play a role in the regulation of mitochondrial respiration and mitochondrial DNA copy number maintenance. In Homo sapiens (Human), this protein is Transmembrane protein 65 (TMEM65).